A 178-amino-acid chain; its full sequence is Cytochrome b6-f complex subunit 4 (178 aa).

3 helical membrane-spanning segments follow: residues leucine 36–valine 56, leucine 95–glutamate 115, and threonine 131–isoleucine 151.

The protein belongs to the cytochrome b family. PetD subfamily. The 4 large subunits of the cytochrome b6-f complex are cytochrome b6, subunit IV (17 kDa polypeptide, petD), cytochrome f and the Rieske protein, while the 4 small subunits are petG, petL, petM and petN. The complex functions as a dimer.

Its subcellular location is the plastid. It is found in the chloroplast thylakoid membrane. Component of the cytochrome b6-f complex, which mediates electron transfer between photosystem II (PSII) and photosystem I (PSI), cyclic electron flow around PSI, and state transitions. In Picea abies (Norway spruce), this protein is Cytochrome b6-f complex subunit 4.